The sequence spans 355 residues: UDP-N-acetylglucosamine--N-acetylmuramyl-(pentapeptide) pyrophosphoryl-undecaprenol N-acetylglucosamine transferase (355 aa).

Residues 15–17 (TGG), Asn-127, Arg-163, Ser-191, Ile-245, 264–269 (ALTVSE), and Gln-289 each bind UDP-N-acetyl-alpha-D-glucosamine.

The protein belongs to the glycosyltransferase 28 family. MurG subfamily.

The protein localises to the cell inner membrane. It catalyses the reaction di-trans,octa-cis-undecaprenyl diphospho-N-acetyl-alpha-D-muramoyl-L-alanyl-D-glutamyl-meso-2,6-diaminopimeloyl-D-alanyl-D-alanine + UDP-N-acetyl-alpha-D-glucosamine = di-trans,octa-cis-undecaprenyl diphospho-[N-acetyl-alpha-D-glucosaminyl-(1-&gt;4)]-N-acetyl-alpha-D-muramoyl-L-alanyl-D-glutamyl-meso-2,6-diaminopimeloyl-D-alanyl-D-alanine + UDP + H(+). The protein operates within cell wall biogenesis; peptidoglycan biosynthesis. Its function is as follows. Cell wall formation. Catalyzes the transfer of a GlcNAc subunit on undecaprenyl-pyrophosphoryl-MurNAc-pentapeptide (lipid intermediate I) to form undecaprenyl-pyrophosphoryl-MurNAc-(pentapeptide)GlcNAc (lipid intermediate II). The polypeptide is UDP-N-acetylglucosamine--N-acetylmuramyl-(pentapeptide) pyrophosphoryl-undecaprenol N-acetylglucosamine transferase (Yersinia enterocolitica serotype O:8 / biotype 1B (strain NCTC 13174 / 8081)).